Here is a 1699-residue protein sequence, read N- to C-terminus: MKMASNDASAAAVVNSNNDTAKSSSDGVLSSMAVTFKRALGGRAKQPPPRETPQRPPRPPTPELVKKIPPPPPNGEDELVVSYSVKDGVSGLPELSTVRQPDEANTAFSVPPLNQRENRDAKEPLTGTILEMWDGEIYHYGLYVERGLVLGVHKPPAAISLAKVELTPLSLFWRPVYTPQYLISPDTLKRLHGESFPYTAFDNNCYAFCCWVLDLNDSWLSRRMIQRTTGFFRPYQDWNRKPLPTMDDSKLKKVANVFLCALSSLFTRPIKDIIGKLRPLNILNILASCDWTFAGIVESLILLAELFGVFWTPPDVSAMIAPLLGDYELQGPEDLAVELVPIVMGGIGLVLGFTKEKIGKMLSSAASTLRACKDLGAYGLEILKLVMKWFFPKKEEANELAMVRSIEDAVLDLEAIENNHMTTLLKDKDSLATYMRTLDLEEEKARKLSTKSASPDIVGTINALLARIAAARSLVHRAKEELSSRLRPVVVMISGKPGIGKTHLARELAKRIAASLTGDQRVGLIPRNGVDHWDAYKGERVVLWDDYGMSNPIHDALRLQELADTCPLTLNCDRIENKGKVFDSDAIIITTNLANPAPLDYVNFEACSRRIDFLVYAEAPEVEKAKRDFPGQPDMWKNAFSPDFSHIKLALAPQGGFDKNGNTPHGKGVMKTLTTGSLIARASGLLHERLDEYELQGPALTTFNFDRNKVLAFRQLAAENKYGLMDTMKVGRQLKDVRTMPELKQALKNISIKRCQIVYSGCTYTLESDGKGNVKVDRVQSATVQTNHELAGALHHLRCARIRYYVKCVQEALYSIIQIAGAAFVTTRIVKRMNIQDLWSKPQVEDTEDTANKDGCPKPKDDEEFVVSSDDIKTEGKKGKNKTGRGKKHTAFSSKGLSDEEYDEYKRIREERNGKYSIEEYLQDRDKYYEEVAIARATEEDFCEEEEAKIRQRIFRPTRKQRKEERASLGLVTGSEIRKRNPDDFKPKGKLWADDDRSVDYNEKLDFEAPPSIWSRIVNFGSGWGFWVSPSLFITSTHVIPQGAQEFFGVPVKQIQIHKSGEFCRLRFPKPIRTDVTGMILEEGAPEGTVVTLLIKRSTGELMPLAARMGTHATMKIQGRTVGGQMGMLLTGSNAKSMDLGTTPGDCGCPYIYKRENDYVVIGVHTAAARGGNTVICATQGSEGEATLEGGDNKGTYCGAPILGPGSAPKLSTKTKFWRSSTAPLPPGTYEPAYLGGKDPRVKGGPSLQQVMRDQLKPFTEPRGKPPKPSVLEAAKRTIINVLEQTIDPPQKWSFTQACASLDKTTSSGHPHHMRKNDCWNGESFTGKLADQASKANLMFEEGKNMTPVYTGALKDELVKTDKIYGKIKKRLLWGSDLATMIRCARAFGGLMDELKAHCVTLPIRVGMNMNEDGPIIFERHSRYKYHYDADYSRWDSTQQRAVLAAALEIMVKFSPEPHLAQIVAEDLLSPSVMDVGDFKISINEGLPSGVPCTSQWNSIAHWLLTLCALSEVTNLSPDIIQANSLFSFYGDDEIVSTDINLNPEKLTAKLKEYGLKPTRPDKTEGPLIISEDLNGLTFLRRTVTRDPAGWFGKLDQSSILRQMYWTRGPNHEDPSETMIPHSQRPIQLMSLLGEAALHGPAFYSKISKLVIAELKEGGMDFYVPRQEPMFRWMRFSDLSTWEGDRNLAPSFVNEDGVE.

A compositionally biased stretch (low complexity) spans 1–19 (MKMASNDASAAAVVNSNND). The interval 1–78 (MKMASNDASA…PPPPPNGEDE (78 aa)) is disordered. An interaction with host MAP1LC3A/LC3 region spans residues 1 to 116 (MKMASNDASA…AFSVPPLNQR (116 aa)). The span at 46–74 (QPPPRETPQRPPRPPTPELVKKIPPPPPN) shows a compositional bias: pro residues. The interval 117 to 330 (ENRDAKEPLT…APLLGDYELQ (214 aa)) is interaction with NTPase. Residues 233–330 (RPYQDWNRKP…APLLGDYELQ (98 aa)) form an interaction with NS4 region. Host ER membrane association stretches follow at residues 250-281 (KLKKVANVFLCALSSLFTRPIKDIIGKLRPLN) and 292-330 (TFAGIVESLILLAELFGVFWTPPDVSAMIAPLLGDYELQ). An interaction with NS1-2, NS4 and homooligomerization region spans residues 331-509 (GPEDLAVELV…GKTHLARELA (179 aa)). The region spanning 465-632 (LARIAAARSL…EKAKRDFPGQ (168 aa)) is the SF3 helicase domain. 495 to 502 (GKPGIGKT) contacts ATP. The segment at 586 to 691 (AIIITTNLAN…ASGLLHERLD (106 aa)) is important for mitochondrion targeting. The tract at residues 764–770 (YTLESDG) is functions as endoplasmic reticulum export signal. A host membrane association region spans residues 801–850 (RIRYYVKCVQEALYSIIQIAGAAFVTTRIVKRMNIQDLWSKPQVEDTEDT). The tract at residues 843–894 (QVEDTEDTANKDGCPKPKDDEEFVVSSDDIKTEGKKGKNKTGRGKKHTAFSS) is disordered. A compositionally biased stretch (basic and acidic residues) spans 850-861 (TANKDGCPKPKD). A compositionally biased stretch (basic residues) spans 879 to 890 (GKNKTGRGKKHT). The segment at 899-904 (DEEYDE) is acidic. An O-(5'-phospho-RNA)-tyrosine modification is found at Tyr902. Positions 992 to 1008 (WADDDRSVDYNEKLDFE) are interaction with host EIF4G. Residues 1009-1189 (APPSIWSRIV…QGSEGEATLE (181 aa)) form the Peptidase C37 domain. Active-site for 3CLpro activity residues include His1038, Glu1062, and Cys1147. The region spanning 1425–1546 (KYHYDADYSR…STDINLNPEK (122 aa)) is the RdRp catalytic domain. Asp1429, Asp1431, Asp1533, and Glu1534 together coordinate Mg(2+).

Homodimer. Homooligomer. Interacts with NTPase; this interaction increases the proapoptotic activity of the NTPase and is crucial for the formation of the viral replication complex. Interacts with NS4; this interaction is crucial for the formation of the viral replication complex. Interacts (via N-terminus) with host VAPA. Interacts with host MAP1LC3A/LC3; this interaction does not seem to be linked to host autophagy, but rather plays a role in the formation of viral factories. In terms of assembly, homooligomer. Interacts with NS1-2; this interaction increases the proapoptotic activity of the NTPase and is crucial for the formation of the viral replication complex. Interacts with NS4; this interaction increases the proapoptotic activity of the NTPase. As to quaternary structure, homodimer. Monomer; in solution. Interacts with NTPase; this interaction increases the proapoptotic activity of the NTPase. Interacts with NS1-2; this interaction is crucial for the formation of the viral replication complex. In terms of assembly, monomer. Interacts with the RNA-directed RNA polymerase; this interaction induces the multimerization of the RdRp and enhances its activity. Interacts with host IEF4G1; this interaction plays a role in translation of viral proteins. As to quaternary structure, homohexamer; also forms fibrous hexameric oligomer. Interacts with the viral genome-linked protein; this interaction induces the multimerization of the RdRp and enhances its activity. Mg(2+) is required as a cofactor. It depends on Mn(2+) as a cofactor. Specific enzymatic cleavages in vivo yield mature proteins. 3CLpro is first autocatalytically cleaved, then processes the whole polyprotein. NS1/2-3 and NS3-4 sites are cleaved rapidly and NS4-5, NS5-6, and NS6-7 sites are processed subsequently and less efficiently. In terms of processing, VPg is uridylylated by the polymerase and is covalently attached to the 5'-end of the polyadenylated genomic and subgenomic RNAs. This uridylylated form acts as a nucleotide-peptide primer for the polymerase. Post-translationally, cleaved by host CASP3/caspase 3 at 18-22 h.p.i. The cleavage allows NS1 secretion, which is essential for intestinal infection and resistance to IFN-lambda.

It is found in the host endoplasmic reticulum membrane. Its subcellular location is the secreted. The protein localises to the host mitochondrion. The protein resides in the host Golgi apparatus membrane. It localises to the host cytoplasm. It is found in the host perinuclear region. It catalyses the reaction a ribonucleoside 5'-triphosphate + H2O = a ribonucleoside 5'-diphosphate + phosphate + H(+). The enzyme catalyses Endopeptidase with a preference for cleavage when the P1 position is occupied by Glu-|-Xaa and the P1' position is occupied by Gly-|-Yaa.. It carries out the reaction RNA(n) + a ribonucleoside 5'-triphosphate = RNA(n+1) + diphosphate. In terms of biological role, induces the proliferation of the host smooth ER membranes forming long tubular structures. These remodeled membranes probably form the viral factories that contain the replication complex. May play a role in viral replication by interacting with host VAPA, a vesicle-associated membrane protein that plays a role in SNARE-mediated vesicle fusion. This interaction may target replication complex to intracellular membranes. Displays NTPase activity, but no helicase activity. Displays RNA chaperone-like activity and destabilizes dsRNA. Induces the formation of convoluted membranes derived from the host ER. These remodeled membranes probably form the viral factories that contain the replication complex. Initiates host cell death by targeting the mitochondrial outer membrane, leading to the permeabilization of mitochondria, programmed host cell death and viral egress. Externalization of host cardiolipin seems to be involved in the process. Probably plays a role in preventing the assembly of host stress granules. Its function is as follows. Probable key protein responsible for the formation of membrane alterations by the virus. Induces the formation of convoluted membranes derived from the host ER. These remodeled membranes probably form the viral factories that contain the replication complex. May play a role in targeting replication complex to intracellular membranes. Functionally, viral genome-linked protein is covalently linked to the 5'-end of the positive-strand, negative-strand genomic RNAs and subgenomic RNA. Acts as a genome-linked replication primer. May recruit ribosome to viral RNA thereby promoting viral proteins translation. Interacts with host translation initiation complex to allow the translation of viral proteins. Induces the formation of aggregates of RNA-directed RNA polymerase in the presence of RNA. Through its interaction with the viral RNA-directed RNA polymerase, plays a crucial role in enhancing the polymerase activity. In terms of biological role, processes the polyprotein. 3CLpro-RdRp is first released by autocleavage, then all other proteins are cleaved. May cleave polyadenylate-binding protein thereby inhibiting cellular translation. Replicates genomic and antigenomic RNA by recognizing replications specific signals. Also transcribes a subgenomic mRNA by initiating RNA synthesis internally on antigenomic RNA. This sgRNA codes for structural proteins. Catalyzes the covalent attachment VPg with viral RNAs. The protein is Genome polyprotein of Lordsdale virus (strain GII/Human/United Kingdom/Lordsdale/1993) (Human enteric calicivirus).